The chain runs to 173 residues: Cytochrome b6-f complex subunit 4, chloroplastic (173 aa).

Residues 1–14 (ESALERRSSSVVMN) constitute a chloroplast transit peptide. Transmembrane regions (helical) follow at residues 49–69 (LLYMFPVCILGTFAAIVGLAV), 108–128 (LLGVLSMAAVPAGLITVPFIE), and 144–164 (SVFLLGTVVAIWLGIGATLPI).

This sequence belongs to the cytochrome b family. PetD subfamily. The 4 large subunits of the cytochrome b6-f complex are cytochrome b6, subunit IV (17 kDa polypeptide, petD), cytochrome f and the Rieske protein, while the 4 small subunits are petG, petL, petM and petN. The complex functions as a dimer.

It is found in the plastid. Its subcellular location is the chloroplast thylakoid membrane. Functionally, component of the cytochrome b6-f complex, which mediates electron transfer between photosystem II (PSII) and photosystem I (PSI), cyclic electron flow around PSI, and state transitions. The sequence is that of Cytochrome b6-f complex subunit 4, chloroplastic from Euglena gracilis.